The chain runs to 262 residues: Indole-3-glycerol phosphate synthase (262 aa).

This sequence belongs to the TrpC family.

The catalysed reaction is 1-(2-carboxyphenylamino)-1-deoxy-D-ribulose 5-phosphate + H(+) = (1S,2R)-1-C-(indol-3-yl)glycerol 3-phosphate + CO2 + H2O. It participates in amino-acid biosynthesis; L-tryptophan biosynthesis; L-tryptophan from chorismate: step 4/5. This is Indole-3-glycerol phosphate synthase from Clostridium acetobutylicum (strain ATCC 824 / DSM 792 / JCM 1419 / IAM 19013 / LMG 5710 / NBRC 13948 / NRRL B-527 / VKM B-1787 / 2291 / W).